The sequence spans 220 residues: uncharacterized protein (220 aa).

A coiled-coil region spans residues 165–202; sequence DKYEDLISDYNKIMEKYREVIKSEIEKYKALSKRKNDI.

This is an uncharacterized protein from Pasteurella multocida (strain Pm70).